A 113-amino-acid polypeptide reads, in one-letter code: Molt-inhibiting hormone (113 aa).

An N-terminal signal peptide occupies residues 1-35 (MMSRTESRYSSQRTWLLSMVVLAALWSISVQRATA). Intrachain disulfides connect cysteine 42–cysteine 79, cysteine 59–cysteine 75, and cysteine 62–cysteine 88.

Belongs to the arthropod CHH/MIH/GIH/VIH hormone family.

The protein resides in the secreted. In terms of biological role, inhibits Y-organs where molting hormone (ecdysteroid) is secreted. A molting cycle is initiated when MIH secretion diminishes or stops. This is Molt-inhibiting hormone from Metacarcinus magister (Dungeness crab).